A 391-amino-acid polypeptide reads, in one-letter code: Phosphoglycerate kinase (391 aa).

Residues 21 to 23 (DLN), Arg-36, 59 to 62 (HLGR), Arg-113, and Arg-146 each bind substrate. ATP is bound by residues Lys-197, Glu-319, and 345–348 (GGDT).

Belongs to the phosphoglycerate kinase family. As to quaternary structure, monomer.

It localises to the cytoplasm. It carries out the reaction (2R)-3-phosphoglycerate + ATP = (2R)-3-phospho-glyceroyl phosphate + ADP. The protein operates within carbohydrate degradation; glycolysis; pyruvate from D-glyceraldehyde 3-phosphate: step 2/5. The polypeptide is Phosphoglycerate kinase (Xanthomonas oryzae pv. oryzae (strain PXO99A)).